The primary structure comprises 250 residues: MSKLRVAVLGARGRIGSEAVRAVEAADDLELVAALGRGDRLETLTDTGAQAVVELTTPASVMENLDFCLRHGIHAVVGTTGWTDERLAQLNTWLDDSPSTGVLIAPNFSIGAVLTMKFAERAARYFESVEVVELHHPNKVDAPSGTATRTAQLIAAARAEAGSAPQPDATTTALDGARGADVDGVPVHAIRLRGLLAHQEVLLGGEGETLTIRHDSLHHSSFMPGILLGVRRVVTTPGLTFGLEHFLDLN.

Residues 10 to 15 (GARGRI), 78 to 80 (GTT), and 105 to 108 (APNF) contribute to the NAD(+) site. H135 serves as the catalytic Proton donor/acceptor. Residue H136 participates in (S)-2,3,4,5-tetrahydrodipicolinate binding. K139 serves as the catalytic Proton donor. 145–146 (GT) contacts (S)-2,3,4,5-tetrahydrodipicolinate. The interval 158–177 (RAEAGSAPQPDATTTALDGA) is disordered.

Belongs to the DapB family.

Its subcellular location is the cytoplasm. It carries out the reaction (S)-2,3,4,5-tetrahydrodipicolinate + NAD(+) + H2O = (2S,4S)-4-hydroxy-2,3,4,5-tetrahydrodipicolinate + NADH + H(+). The enzyme catalyses (S)-2,3,4,5-tetrahydrodipicolinate + NADP(+) + H2O = (2S,4S)-4-hydroxy-2,3,4,5-tetrahydrodipicolinate + NADPH + H(+). It functions in the pathway amino-acid biosynthesis; L-lysine biosynthesis via DAP pathway; (S)-tetrahydrodipicolinate from L-aspartate: step 4/4. Functionally, catalyzes the conversion of 4-hydroxy-tetrahydrodipicolinate (HTPA) to tetrahydrodipicolinate. The sequence is that of 4-hydroxy-tetrahydrodipicolinate reductase from Streptomyces griseus subsp. griseus (strain JCM 4626 / CBS 651.72 / NBRC 13350 / KCC S-0626 / ISP 5235).